Here is a 92-residue protein sequence, read N- to C-terminus: Probable Fe(2+)-trafficking protein (92 aa).

Belongs to the Fe(2+)-trafficking protein family.

In terms of biological role, could be a mediator in iron transactions between iron acquisition and iron-requiring processes, such as synthesis and/or repair of Fe-S clusters in biosynthetic enzymes. This chain is Probable Fe(2+)-trafficking protein, found in Shewanella loihica (strain ATCC BAA-1088 / PV-4).